Reading from the N-terminus, the 314-residue chain is MMSQEFAHLSVLLTETVAGLNIKEDGIYIDGTFGRGGHSREVLKHLGENGRLIAIDRDPQAIAAAEQFADDARFSIVHGGFGQLATYVEDLGLKGKIDGVLLDFGVSSPQLDDAERGFSFLRDGPLDMRMDNSQGETAADWIARAEIEDMAWVFKTYGEEKNSRHIARCIAADREKTPFLRTKELADLIARISKNKERNKHPATRVFQAIRIYINSELEQIDQALEGALSVLAPHGRLSVISFHSLEDRMVKRFIRRHCQGESVPHGLPITEAEINKSRLLKGIGKAIKPSEEEVERNTRARSSVLRIAERLEY.

S-adenosyl-L-methionine is bound by residues 36–38 (GGH), aspartate 56, phenylalanine 81, aspartate 103, and glutamine 110.

The protein belongs to the methyltransferase superfamily. RsmH family.

It localises to the cytoplasm. The enzyme catalyses cytidine(1402) in 16S rRNA + S-adenosyl-L-methionine = N(4)-methylcytidine(1402) in 16S rRNA + S-adenosyl-L-homocysteine + H(+). Its function is as follows. Specifically methylates the N4 position of cytidine in position 1402 (C1402) of 16S rRNA. The sequence is that of Ribosomal RNA small subunit methyltransferase H from Shewanella sediminis (strain HAW-EB3).